A 504-amino-acid polypeptide reads, in one-letter code: Pre-mRNA-processing factor 19 (504 aa).

Ser2 is modified (N-acetylserine). One can recognise a U-box domain in the interval 2-73 (SLICSISNEV…KPPSATSIPA (72 aa)). A may mediate interaction with PSMC5 region spans residues 68 to 223 (ATSIPAILKA…VGLHSASIPG (156 aa)). An N6-acetyllysine mark is found at Lys122, Lys179, Lys244, and Lys261. Residues 219–259 (ASIPGILALDLCPSDTNKILTGGADKNVVVFDKSTEQILAT) form a WD 1 repeat. WD repeat units follow at residues 262 to 301 (GHTK…CVQV), 304 to 345 (AHES…TKVT), 348 to 387 (TSGC…NVAN), 390 to 429 (GHSG…NFKT), 433 to 472 (DNNF…LHFT), and 473 to 503 (EHSG…KFYS).

It belongs to the WD repeat PRP19 family. As to quaternary structure, homotetramer. Component of activated, catalytic and post-catalytic spliceosomes. Component of the Prp19 complex/PRP19C/Nineteen complex/NTC and related complexes described as PRP19-CDC5L splicing complex and PSO4 complex. A homotetramer of PRPF19, CDC5L, PLRG1 and BCAS2 constitute the core of those complexes. The interaction with CDC5L, PLRG1 and BCAS2 is direct within this core complex. At least three less stably associated proteins CTNNBL1, CWC15 and HSPA8 are found in the Prp19 complex. The Prp19 complex associates with the spliceosome during its assembly and remodeling recruiting additional proteins. Component of the XAB2 complex, a multimeric protein complex composed of XAB2, PRPF19, AQR, ZNF830, ISY1, and PPIE. Interacts with CWC22 and EIF4A3 in an RNA-independent manner. Interacts with RPA1 and RPA2; the PRP19-CDC5L complex is recruited to the sites of DNA repair where it interacts with the replication protein A complex (RPA). Interacts with SETMAR; required for SETMAR recruitment to site of DNA damage. Interacts with U2AF2; the interaction is direct and recruits the Prp19 complex to RNA polymerase II C-terminal domain (CTD) and the pre-mRNA. Interacts with PRPF3. Interacts with APEX1, DNTT and PSMB4. Interacts with KNSTRN. Interacts with PSMC5. Isoform 2 (via N-terminus) interacts with PPIA. Isoform 2 does not interact with CDC5L. Interacts with KHDC4. Interacts with USB1. Interacts with DDX41. Expressed in white and brown adipose tissues, brain and to a lower extent in liver, kidney, muscle, lung and spleen (at protein level).

Its subcellular location is the nucleus. The protein localises to the nucleoplasm. It is found in the cytoplasm. The protein resides in the cytoskeleton. It localises to the spindle. Its subcellular location is the lipid droplet. It carries out the reaction S-ubiquitinyl-[E2 ubiquitin-conjugating enzyme]-L-cysteine + [acceptor protein]-L-lysine = [E2 ubiquitin-conjugating enzyme]-L-cysteine + N(6)-ubiquitinyl-[acceptor protein]-L-lysine.. The protein operates within protein modification; protein ubiquitination. Its function is as follows. Ubiquitin-protein ligase which is a core component of several complexes mainly involved in pre-mRNA splicing and DNA repair. Required for pre-mRNA splicing as component of the spliceosome. Core component of the PRP19C/Prp19 complex/NTC/Nineteen complex which is part of the spliceosome and participates in its assembly, its remodeling and is required for its activity. During assembly of the spliceosome, mediates 'Lys-63'-linked polyubiquitination of the U4 spliceosomal protein PRPF3. Ubiquitination of PRPF3 allows its recognition by the U5 component PRPF8 and stabilizes the U4/U5/U6 tri-snRNP spliceosomal complex. Recruited to RNA polymerase II C-terminal domain (CTD) and the pre-mRNA, it may also couple the transcriptional and spliceosomal machineries. The XAB2 complex, which contains PRPF19, is also involved in pre-mRNA splicing, transcription and transcription-coupled repair. Beside its role in pre-mRNA splicing PRPF19, as part of the PRP19-CDC5L complex, plays a role in the DNA damage response/DDR. It is recruited to the sites of DNA damage by the RPA complex where PRPF19 directly ubiquitinates RPA1 and RPA2. 'Lys-63'-linked polyubiquitination of the RPA complex allows the recruitment of the ATR-ATRIP complex and the activation of ATR, a master regulator of the DNA damage response. May also play a role in DNA double-strand break (DSB) repair by recruiting the repair factor SETMAR to altered DNA. As part of the PSO4 complex may also be involved in the DNA interstrand cross-links/ICLs repair process. In addition, may also mediate 'Lys-48'-linked polyubiquitination of substrates and play a role in proteasomal degradation. May play a role in the biogenesis of lipid droplets. May play a role in neural differentiation possibly through its function as part of the spliceosome. Functionally, forced expression leads to suppression of neuronal differentiation, and on the contrary to stimulation of astroglial cell differentiation in retinoic acid-primed P19 cells. This Mus musculus (Mouse) protein is Pre-mRNA-processing factor 19.